The primary structure comprises 509 residues: L-aspartate oxidase (509 aa).

FAD is bound by residues serine 14–alanine 17, serine 45–glycine 52, and aspartate 214. Arginine 279 functions as the Proton donor/acceptor in the catalytic mechanism. FAD-binding positions include glutamate 358 and serine 374 to leucine 375. Disordered stretches follow at residues alanine 389–proline 412 and asparagine 486–histidine 509. Basic and acidic residues predominate over residues proline 402–proline 412. Positions alanine 499–histidine 509 are enriched in acidic residues.

Belongs to the FAD-dependent oxidoreductase 2 family. NadB subfamily. It depends on FAD as a cofactor.

It localises to the cytoplasm. The enzyme catalyses L-aspartate + O2 = iminosuccinate + H2O2. It participates in cofactor biosynthesis; NAD(+) biosynthesis; iminoaspartate from L-aspartate (oxidase route): step 1/1. Catalyzes the oxidation of L-aspartate to iminoaspartate, the first step in the de novo biosynthesis of NAD(+). In Halobacterium salinarum (strain ATCC 700922 / JCM 11081 / NRC-1) (Halobacterium halobium), this protein is L-aspartate oxidase (nadB).